Consider the following 220-residue polypeptide: Ras-related protein Rab-3A (220 aa).

Positions 31, 32, 33, 34, 35, 36, 37, 48, 49, 53, and 54 each coordinate GTP. Residue Thr36 coordinates Mg(2+). The Switch 1 signature appears at 49–58 (PAFVSTVGID). Residues Thr54 and Asp77 each coordinate Mg(2+). A GTP-binding site is contributed by Gly80. The Switch 2 signature appears at 80–96 (GQERYRTITTAYYRGAM). Position 86 is a phosphothreonine (Thr86). GTP is bound by residues Asn135, Lys136, Asp138, Ala166, and Lys167. A phosphoserine mark is found at Ser188 and Ser190. Positions 194–220 (ADPAVTGAKQGPQLTDQQAPPHQDCAC) are disordered. 2 S-geranylgeranyl cysteine lipidation sites follow: Cys218 and Cys220. A Cysteine methyl ester modification is found at Cys220.

Belongs to the small GTPase superfamily. Rab family. In terms of assembly, interacts with RIMS1 and RIMS2. Interacts with Rabphilin-3A/RPH3A and Rab effector Noc2/RPH3AL. Interacts with SYTL4. Interacts with RAB3IP. Interacts with SGSM1 and SGSM3. Interacts with SYT1. Interacts with MYH9; this interaction is essential for lysosome exocytosis and plasma membrane repair. Interacts with STXBP1; this interaction promotes RAB3A dissociation from the vesicle membrane. Interacts with SNCA. Interacts with GDI1, GDI2, CHM and CHML; phosphorylation at Thr-86 disrupts these interactions. Interacts with MADD (via uDENN domain); the GTP-bound form is preferred for interaction. Mg(2+) serves as cofactor. Post-translationally, phosphorylation of Thr-86 in the switch II region by LRRK2 prevents the association of RAB regulatory proteins, including CHM, CHML and RAB GDP dissociation inhibitors GDI1 and GDI2. In terms of tissue distribution, specifically expressed in brain.

It is found in the cytoplasm. The protein resides in the cytosol. It localises to the lysosome. Its subcellular location is the cytoplasmic vesicle. The protein localises to the secretory vesicle. It is found in the cell projection. The protein resides in the axon. It localises to the cell membrane. Its subcellular location is the presynapse. The protein localises to the postsynapse. It carries out the reaction GTP + H2O = GDP + phosphate + H(+). Regulated by guanine nucleotide exchange factors (GEFs) including RAB3IL1 and MADD which promote the exchange of bound GDP for free GTP. Regulated by GTPase activating proteins (GAPs) including RAB3GAP1 and TBC1D10B which increase the GTP hydrolysis activity. Inhibited by GDP dissociation inhibitors (GDIs) which prevent Rab-GDP dissociation. Functionally, the small GTPases Rab are key regulators of intracellular membrane trafficking, from the formation of transport vesicles to their fusion with membranes. Rabs cycle between an inactive GDP-bound form and an active GTP-bound form that is able to recruit to membranes different sets of downstream effectors directly responsible for vesicle formation, movement, tethering and fusion. RAB3A plays a central role in regulated exocytosis and secretion. Controls the recruitment, tethering and docking of secretory vesicles to the plasma membrane. Upon stimulation, switches to its active GTP-bound form, cycles to vesicles and recruits effectors such as RIMS1, RIMS2, Rabphilin-3A/RPH3A, RPH3AL or SYTL4 to help the docking of vesicules onto the plasma membrane. Upon GTP hydrolysis by GTPase-activating protein, dissociates from the vesicle membrane allowing the exocytosis to proceed. Stimulates insulin secretion through interaction with RIMS2 or RPH3AL effectors in pancreatic beta cells. Regulates calcium-dependent lysosome exocytosis and plasma membrane repair (PMR) via the interaction with 2 effectors, SYTL4 and myosin-9/MYH9. Acts as a positive regulator of acrosome content secretion in sperm cells by interacting with RIMS1. Also plays a role in the regulation of dopamine release by interacting with synaptotagmin I/SYT. This Bos taurus (Bovine) protein is Ras-related protein Rab-3A (RAB3A).